The sequence spans 277 residues: MAIVKMKPTSAGRRGMVRVVTEGLHKGAPYAPLLEKKNSTAGRNNNGHITTRHKGGGHKHHYRVVDFKRNKDGISAKVERIEYDPNRTAFIALLCYADGERRYIIAPRGIQAGVVLVSGAEAAIKVGNTLPIRNIPVGTTIHCIEMKPGKGAQIARSAGASAVLLAKEGAYAQVRLRSGEVRKINVDCRATIGEVGNEEQSLKKIGKAGANRWRGIRPTVRGVVMNPVDHPHGGGEGRTGEAREPVSPWGTPAKGYRTRNNKRTDNMIVRRRYSNKG.

2 disordered regions span residues 37–60 (KNST…GHKH) and 223–264 (VVMN…NKRT). Residues 39-49 (STAGRNNNGHI) are compositionally biased toward polar residues. Residues 50–60 (TTRHKGGGHKH) are compositionally biased toward basic residues. Residues 229 to 244 (DHPHGGGEGRTGEARE) show a composition bias toward basic and acidic residues.

Belongs to the universal ribosomal protein uL2 family. Part of the 50S ribosomal subunit. Forms a bridge to the 30S subunit in the 70S ribosome.

In terms of biological role, one of the primary rRNA binding proteins. Required for association of the 30S and 50S subunits to form the 70S ribosome, for tRNA binding and peptide bond formation. It has been suggested to have peptidyltransferase activity; this is somewhat controversial. Makes several contacts with the 16S rRNA in the 70S ribosome. This chain is Large ribosomal subunit protein uL2, found in Neisseria gonorrhoeae (strain ATCC 700825 / FA 1090).